The primary structure comprises 376 residues: MEVPRLSQHISTPNSPCEEMIKNLSLENIQLCERDGNKSQDSGIAEMEELPVPHNIKISNITCDSFKISWDMDPKSKDRITHYFIDLNKKENKNSNKFKHKDVPTKLVAKAVPLPMTVRGHWFLSPRTEYTVAVQTASKQVDGDYVVSEWSEIIEFCTADYSKVHLTQLMEKAEAIAGRMLKFSVFYRNQHKEYFDYIREHHGNVMQPSLKDNSGSHGSPISTKLEGIFFSCNTEFNTGKPPQDSPYGRYRVEVPAEKLFNPNTNLYFGDFYCMYTAYHYVILVIAPMGSPGDEFCKQRLPQLSLSDNKFLTCTQEHGGLVFHQAQDVILEVIYTDPVDLSWGTVAEIIGHQLMSLSTANAKKDPSCKTCNISVGR.

Positions 52 to 161 (VPHNIKISNI…EIIEFCTADY (110 aa)) constitute a Fibronectin type-III domain.

The protein belongs to the PHYHIP family.

Its function is as follows. May play a role in the development of the central system. The sequence is that of Phytanoyl-CoA hydroxylase-interacting protein-like (phyhipl) from Xenopus tropicalis (Western clawed frog).